Consider the following 442-residue polypeptide: tRNA-2-methylthio-N(6)-dimethylallyladenosine synthase (442 aa).

One can recognise an MTTase N-terminal domain in the interval 2–120 (KKVFIRTFGC…LPKMIVDKET (119 aa)). Cys-11, Cys-49, Cys-83, Cys-157, Cys-161, and Cys-164 together coordinate [4Fe-4S] cluster. The 233-residue stretch at 143–375 (RVEGGAAFVS…NEVIEAETAR (233 aa)) folds into the Radical SAM core domain. The 64-residue stretch at 378–441 (QTMIGTVQRC…TFSLRGKVVE (64 aa)) folds into the TRAM domain.

This sequence belongs to the methylthiotransferase family. MiaB subfamily. Monomer. [4Fe-4S] cluster serves as cofactor.

The protein localises to the cytoplasm. The catalysed reaction is N(6)-dimethylallyladenosine(37) in tRNA + (sulfur carrier)-SH + AH2 + 2 S-adenosyl-L-methionine = 2-methylsulfanyl-N(6)-dimethylallyladenosine(37) in tRNA + (sulfur carrier)-H + 5'-deoxyadenosine + L-methionine + A + S-adenosyl-L-homocysteine + 2 H(+). Its function is as follows. Catalyzes the methylthiolation of N6-(dimethylallyl)adenosine (i(6)A), leading to the formation of 2-methylthio-N6-(dimethylallyl)adenosine (ms(2)i(6)A) at position 37 in tRNAs that read codons beginning with uridine. The polypeptide is tRNA-2-methylthio-N(6)-dimethylallyladenosine synthase (Neisseria meningitidis serogroup C (strain 053442)).